A 313-amino-acid chain; its full sequence is MTSCHIAEEPIKKVAIFGGTHGNELTGVFLVKHWLENGAEIQRTGLEVKPFITNPRAVKKCTRYIDCDLNRIFDLENLGKKMSEDLPYEVRRAQEIYHLFGPKDGEDSYDIIFDLHNTTSNMGCTLILEDSRNNFLIQMFHYIKTSLAPLPCYVYLIEHPSLKYATTRSIAKCPVGIEVGPQPQGVLRADILDQMRKMIKHALDFIHHFNEGKEFPPCAIEVYKIIEKVDYPRDENGEIAAVIHPNLQDQDWKPLHPGDPMFLTLDGKTMPLGGDCTVYPVFVNEAAYYEKKEAFAKTTKLMLNAKSIRCSVH.

His-21 and Glu-24 together coordinate Zn(2+). Substrate is bound by residues Arg-63 and 70–71; that span reads NR. His-116 contacts Zn(2+). Substrate is bound by residues 164–168, Glu-178, and Tyr-288; that span reads YATTR. Glu-178 is an active-site residue.

The protein belongs to the AspA/AstE family. Aspartoacylase subfamily. As to quaternary structure, homodimer. It depends on Zn(2+) as a cofactor.

Its subcellular location is the cytoplasm. The protein resides in the nucleus. The enzyme catalyses an N-acyl-L-aspartate + H2O = a carboxylate + L-aspartate. Its function is as follows. Catalyzes the deacetylation of N-acetylaspartic acid (NAA) to produce acetate and L-aspartate. NAA occurs in high concentration in brain and its hydrolysis NAA plays a significant part in the maintenance of intact white matter. In other tissues it acts as a scavenger of NAA from body fluids. This chain is Aspartoacylase (ASPA), found in Macaca fascicularis (Crab-eating macaque).